A 455-amino-acid polypeptide reads, in one-letter code: Asparagine--tRNA ligase (455 aa).

The protein belongs to the class-II aminoacyl-tRNA synthetase family. In terms of assembly, homodimer.

The protein localises to the cytoplasm. The enzyme catalyses tRNA(Asn) + L-asparagine + ATP = L-asparaginyl-tRNA(Asn) + AMP + diphosphate + H(+). The polypeptide is Asparagine--tRNA ligase (Lawsonia intracellularis (strain PHE/MN1-00)).